A 273-amino-acid polypeptide reads, in one-letter code: Homeobox protein Nkx-2.2 (273 aa).

Disordered regions lie at residues Met-1–Val-56 and Ala-91–Arg-131. Acidic residues predominate over residues Asp-20–Gly-38. Residues Lys-128–Arg-187 constitute a DNA-binding region (homeobox).

This sequence belongs to the NK-2 homeobox family. Interacts with OLIG2.

Its subcellular location is the nucleus. In terms of biological role, transcriptional activator involved in the development of insulin-producting beta cells in the endocrine pancreas. May also be involved in specifying diencephalic neuromeric boundaries, and in controlling the expression of genes that play a role in axonal guidance. Binds to elements within the NEUROD1 promoter. The sequence is that of Homeobox protein Nkx-2.2 (NKX2-2) from Mesocricetus auratus (Golden hamster).